Here is a 268-residue protein sequence, read N- to C-terminus: Phosphoethanolamine/phosphocholine phosphatase (268 aa).

The active-site Nucleophile is Asp-32. Mg(2+)-binding residues include Asp-32 and Asp-34. Asp-34 serves as the catalytic Proton donor. Substrate contacts are provided by Asp-43 and Asp-123. Mg(2+) is bound at residue Asp-203.

This sequence belongs to the HAD-like hydrolase superfamily. PHOSPHO family. It depends on Mg(2+) as a cofactor. As to expression, expressed at sites of mineralization in bone and cartilage. Highly expressed in hypertrophic chondrocytes compared to non-chondrogenic tissues. Expressed in chondrocytes but not in heart, liver, lung, kidney, spleen, muscle, adipose tissues not duodenum. In diaphyseal cortical bone, it is expressed in the osteoid layer of the periosteum, forming surfaces of growing osteons, and newly formed osteocytes, whereas it is not expressed in the endosteum and closed osteons. In growth plate cartilage, it is limited to the early hypertrophic chondrocytes and the ossification groove of Ranvier. Highly expressed on the mineralization surfaces of the cartilage remnants and trabecular bone within the primary spongiosa. Expressed in 17-day-old embryonic calvaria, the osteoid present on the intramembranous and periosteal bone surfaces but not in soft tissues examined.

It is found in the extracellular vesicle. The catalysed reaction is phosphoethanolamine + H2O = ethanolamine + phosphate. The enzyme catalyses phosphocholine + H2O = choline + phosphate. Its function is as follows. Phosphatase that has a high activity toward phosphoethanolamine (PEA) and phosphocholine (PCho). Involved in the generation of inorganic phosphate for bone mineralization. The protein is Phosphoethanolamine/phosphocholine phosphatase (PHOSPHO1) of Gallus gallus (Chicken).